We begin with the raw amino-acid sequence, 113 residues long: Antimicrobial peptide microplusin (113 aa).

An N-terminal signal peptide occupies residues 1 to 19 (MKSLLVLALLAFGAVLVSA). 3 disulfides stabilise this stretch: Cys25-Cys71, Cys38-Cys99, and Cys60-Cys65.

Its subcellular location is the secreted. Its function is as follows. Has bacteriostatic activity against Gram-positive bacteria, but not against Gram-negative bacteria. Has fungistatic activity against some but not all fungi. Binds and sequesters copper and iron ions. Copper-chelating activity is crucial for antimicrobial activity against M.luteus. In Argas monolakensis (Mono lake bird tick), this protein is Antimicrobial peptide microplusin.